We begin with the raw amino-acid sequence, 393 residues long: NAD(P)H-quinone oxidoreductase subunit H, chloroplastic (393 aa).

This sequence belongs to the complex I 49 kDa subunit family. As to quaternary structure, NDH is composed of at least 16 different subunits, 5 of which are encoded in the nucleus.

The protein localises to the plastid. Its subcellular location is the chloroplast thylakoid membrane. It carries out the reaction a plastoquinone + NADH + (n+1) H(+)(in) = a plastoquinol + NAD(+) + n H(+)(out). It catalyses the reaction a plastoquinone + NADPH + (n+1) H(+)(in) = a plastoquinol + NADP(+) + n H(+)(out). Functionally, NDH shuttles electrons from NAD(P)H:plastoquinone, via FMN and iron-sulfur (Fe-S) centers, to quinones in the photosynthetic chain and possibly in a chloroplast respiratory chain. The immediate electron acceptor for the enzyme in this species is believed to be plastoquinone. Couples the redox reaction to proton translocation, and thus conserves the redox energy in a proton gradient. The chain is NAD(P)H-quinone oxidoreductase subunit H, chloroplastic from Acorus calamus var. americanus (American sweet flag).